Here is a 923-residue protein sequence, read N- to C-terminus: Serine/threonine-protein phosphatase 6 regulatory subunit 2 (923 aa).

Position 289 is a phosphoserine (S289). 3 disordered regions span residues 409-441, 662-685, and 743-766; these read EASGSDGKVEPLQGSGDGNGKLETTPSITSPPE, VPGLAAPSSPTQKEGPRSESDSAG, and RCSSPVDMDHSNAEGGQSPGPEKT. Polar residues predominate over residues 430 to 441; that stretch reads LETTPSITSPPE. S746 and S796 each carry phosphoserine.

The protein belongs to the SAPS family. As to quaternary structure, protein phosphatase 6 (PP6) holoenzyme is proposed to be a heterotrimeric complex formed by the catalytic subunit, a SAPS domain-containing subunit (PP6R) and an ankyrin repeat-domain containing regulatory subunit (ARS). Interacts with PPP6C and NFKBIE. Interacts with ANKRD28. Strongest expression in bladder and lower levels found in heart and pancreas. Very weak expression observed in all other tissues tested.

The protein localises to the cytoplasm. In terms of biological role, regulatory subunit of protein phosphatase 6 (PP6). May function as a scaffolding PP6 subunit. Involved in the PP6-mediated dephosphorylation of NFKBIE opposing its degradation in response to TNF-alpha. The sequence is that of Serine/threonine-protein phosphatase 6 regulatory subunit 2 (Ppp6r2) from Mus musculus (Mouse).